The sequence spans 264 residues: 3-methyl-2-oxobutanoate hydroxymethyltransferase (264 aa).

Residues Asp-45 and Asp-84 each coordinate Mg(2+). 3-methyl-2-oxobutanoate-binding positions include 45–46, Asp-84, and Lys-112; that span reads DS. Glu-114 provides a ligand contact to Mg(2+). Glu-181 serves as the catalytic Proton acceptor.

Belongs to the PanB family. Homodecamer; pentamer of dimers. The cofactor is Mg(2+).

It localises to the cytoplasm. It carries out the reaction 3-methyl-2-oxobutanoate + (6R)-5,10-methylene-5,6,7,8-tetrahydrofolate + H2O = 2-dehydropantoate + (6S)-5,6,7,8-tetrahydrofolate. It participates in cofactor biosynthesis; (R)-pantothenate biosynthesis; (R)-pantoate from 3-methyl-2-oxobutanoate: step 1/2. In terms of biological role, catalyzes the reversible reaction in which hydroxymethyl group from 5,10-methylenetetrahydrofolate is transferred onto alpha-ketoisovalerate to form ketopantoate. In Escherichia coli O8 (strain IAI1), this protein is 3-methyl-2-oxobutanoate hydroxymethyltransferase.